We begin with the raw amino-acid sequence, 424 residues long: Keratin, type I cytoskeletal 20 (424 aa).

The interval 1 to 69 (MDFSRRSFHR…TGGGDLFVGN (69 aa)) is head. Phosphoserine; by MAPKAPK2, MAPKAPK3 and PKC is present on Ser-13. Residues 70 to 105 (EKMAMQNLNDRLASYLEKVRTLEQSNSKLEVQIKQW) are coil 1A. In terms of domain architecture, IF rod spans 70–381 (EKMAMQNLND…RLLEGEDVKT (312 aa)). Residues 106-123 (YETNAPRAGRDYSAYYRQ) are linker 1. The segment at 124–215 (IEELRSQIKD…KEHQEEVDGL (92 aa)) is coil 1B. The linker 12 stretch occupies residues 216 to 238 (HKHLGNTVNVEVDAAPGLNLGVI). The interval 239-377 (MNEMRQKYEV…ATYRRLLEGE (139 aa)) is coil 2. A tail region spans residues 378–424 (DVKTTEYQLSTLEERDIKKTRKIKTVVQEVVDGKVVSSEVKEVEENI).

The protein belongs to the intermediate filament family. Heterotetramer of two type I and two type II keratins. Associates with KRT8. Hyperphosphorylation at Ser-13 occurs during the early stages of apoptosis but becomes less prominent during the later stages. Phosphorylation at Ser-13 also increases in response to stress brought on by cell injury. In terms of processing, proteolytically cleaved by caspases during apoptosis. Cleavage occurs at Asp-228. In terms of tissue distribution, expressed predominantly in the intestinal epithelium. Expressed in luminal cells of colonic mucosa. Also expressed in the Merkel cells of keratinized oral mucosa; specifically at the tips of some rete ridges of the gingival mucosa, in the basal layer of the palatal mucosa and in the taste buds of lingual mucosa.

It localises to the cytoplasm. Its function is as follows. Plays a significant role in maintaining keratin filament organization in intestinal epithelia. When phosphorylated, plays a role in the secretion of mucin in the small intestine. This chain is Keratin, type I cytoskeletal 20 (KRT20), found in Homo sapiens (Human).